The following is a 218-amino-acid chain: Small ribosomal subunit protein uS3c (218 aa).

The KH type-2 domain maps to 47 to 118; the sequence is VQKNIRISSG…KLNIAITRIS (72 aa).

It belongs to the universal ribosomal protein uS3 family. As to quaternary structure, part of the 30S ribosomal subunit.

It is found in the plastid. It localises to the chloroplast. This is Small ribosomal subunit protein uS3c (rps3) from Lepidium virginicum (Virginia pepperweed).